The primary structure comprises 58 residues: Preprotein translocase subunit SecG (58 aa).

Residues 1 to 32 (MAQKKKSSGSGLMSSAGLMTYYDADKKAIHVQ) are Cytoplasmic-facing. The chain crosses the membrane as a helical span at residues 33 to 54 (PKTVFIFGAICGIVILAFSAGF). Over 55 to 58 (GLWP) the chain is Extracellular.

Belongs to the SEC61-beta family. Component of the protein translocase complex. Heterotrimer consisting of alpha (SecY), beta (SecG) and gamma (SecE) subunits. Can form oligomers of the heterotrimer.

Its subcellular location is the cell membrane. In terms of biological role, involved in protein export. The function of the beta subunit is unknown, but it may be involved in stabilization of the trimeric complex. The sequence is that of Preprotein translocase subunit SecG from Methanococcoides burtonii (strain DSM 6242 / NBRC 107633 / OCM 468 / ACE-M).